The sequence spans 283 residues: DegV domain-containing protein lmo2514 (283 aa).

The region spanning 5–282 is the DegV domain; sequence IAVVTDSTTY…EGALGLTWSI (278 aa). S63 and S96 together coordinate hexadecanoate.

Functionally, may bind long-chain fatty acids, such as palmitate, and may play a role in lipid transport or fatty acid metabolism. The polypeptide is DegV domain-containing protein lmo2514 (Listeria monocytogenes serovar 1/2a (strain ATCC BAA-679 / EGD-e)).